The sequence spans 180 residues: UPF0227 protein KPN78578_10770 (180 aa).

Belongs to the UPF0227 family.

The polypeptide is UPF0227 protein KPN78578_10770 (Klebsiella pneumoniae subsp. pneumoniae (strain ATCC 700721 / MGH 78578)).